Here is a 378-residue protein sequence, read N- to C-terminus: Erythronate-4-phosphate dehydrogenase (378 aa).

Substrate is bound by residues Ser45 and Thr66. NAD(+) is bound by residues Asp146 and Thr175. Residue Arg208 is part of the active site. Asp232 contributes to the NAD(+) binding site. Glu237 is an active-site residue. Residue His254 is the Proton donor of the active site. An NAD(+)-binding site is contributed by Gly257. Tyr258 is a binding site for substrate.

The protein belongs to the D-isomer specific 2-hydroxyacid dehydrogenase family. PdxB subfamily. Homodimer.

It localises to the cytoplasm. It catalyses the reaction 4-phospho-D-erythronate + NAD(+) = (R)-3-hydroxy-2-oxo-4-phosphooxybutanoate + NADH + H(+). It functions in the pathway cofactor biosynthesis; pyridoxine 5'-phosphate biosynthesis; pyridoxine 5'-phosphate from D-erythrose 4-phosphate: step 2/5. Its function is as follows. Catalyzes the oxidation of erythronate-4-phosphate to 3-hydroxy-2-oxo-4-phosphonooxybutanoate. The chain is Erythronate-4-phosphate dehydrogenase from Escherichia coli O139:H28 (strain E24377A / ETEC).